The sequence spans 383 residues: uncharacterized protein (383 aa).

It belongs to the peptidase M20 family.

This is an uncharacterized protein from Staphylococcus epidermidis (strain ATCC 12228 / FDA PCI 1200).